Reading from the N-terminus, the 91-residue chain is B3 domain-containing protein Os03g0164300 (91 aa).

Positions 1–91 form a DNA-binding region, TF-B3; the sequence is MTNAKMTFAV…VLVLKVHVLK (91 aa).

It localises to the nucleus. The sequence is that of B3 domain-containing protein Os03g0164300 from Oryza sativa subsp. japonica (Rice).